The sequence spans 160 residues: SsrA-binding protein (160 aa).

This sequence belongs to the SmpB family.

It localises to the cytoplasm. Functionally, required for rescue of stalled ribosomes mediated by trans-translation. Binds to transfer-messenger RNA (tmRNA), required for stable association of tmRNA with ribosomes. tmRNA and SmpB together mimic tRNA shape, replacing the anticodon stem-loop with SmpB. tmRNA is encoded by the ssrA gene; the 2 termini fold to resemble tRNA(Ala) and it encodes a 'tag peptide', a short internal open reading frame. During trans-translation Ala-aminoacylated tmRNA acts like a tRNA, entering the A-site of stalled ribosomes, displacing the stalled mRNA. The ribosome then switches to translate the ORF on the tmRNA; the nascent peptide is terminated with the 'tag peptide' encoded by the tmRNA and targeted for degradation. The ribosome is freed to recommence translation, which seems to be the essential function of trans-translation. In Chloroflexus aurantiacus (strain ATCC 29364 / DSM 637 / Y-400-fl), this protein is SsrA-binding protein.